A 949-amino-acid chain; its full sequence is Translation initiation factor IF-2 (949 aa).

Disordered regions lie at residues 61 to 122, 139 to 159, and 171 to 284; these read IQAN…PIIK, VENT…QKLQ, and LTQS…NKSH. Basic and acidic residues-rich tracts occupy residues 112–122 and 150–159; these read KKKEAPAPIIK and QIEKAKQKLQ. Residues 174–190 show a composition bias toward low complexity; that stretch reads SNTNTTNNANSASNVSN. Positions 191–208 are enriched in basic and acidic residues; sequence AKKEISEVKKQEQEIKRH. A compositionally biased stretch (basic residues) spans 209–220; the sequence is ENIKRRTGFRVI. Positions 249–264 are enriched in basic and acidic residues; sequence EDIKKEWQEKDKQETK. The 170-residue stretch at 448–617 folds into the tr-type G domain; that stretch reads ERPPVVTIMG…LIQADIMELK (170 aa). The G1 stretch occupies residues 457 to 464; it reads GHVDHGKT. Residue 457 to 464 participates in GTP binding; it reads GHVDHGKT. Residues 482 to 486 are G2; that stretch reads GITQH. Positions 503 to 506 are G3; sequence DTPG. GTP contacts are provided by residues 503–507 and 557–560; these read DTPGH and NKMD. Residues 557 to 560 are G4; sequence NKMD. Positions 593–595 are G5; the sequence is SAK.

This sequence belongs to the TRAFAC class translation factor GTPase superfamily. Classic translation factor GTPase family. IF-2 subfamily.

It localises to the cytoplasm. One of the essential components for the initiation of protein synthesis. Protects formylmethionyl-tRNA from spontaneous hydrolysis and promotes its binding to the 30S ribosomal subunits. Also involved in the hydrolysis of GTP during the formation of the 70S ribosomal complex. The protein is Translation initiation factor IF-2 (infB) of Helicobacter pylori (strain J99 / ATCC 700824) (Campylobacter pylori J99).